The following is a 458-amino-acid chain: UDP-N-acetylglucosamine 1-carboxyvinyltransferase (458 aa).

22–23 (KN) contributes to the phosphoenolpyruvate binding site. Residue R94 coordinates UDP-N-acetyl-alpha-D-glucosamine. The Proton donor role is filled by D119. Residues D309 and V331 each contribute to the UDP-N-acetyl-alpha-D-glucosamine site.

It belongs to the EPSP synthase family. MurA subfamily.

The protein resides in the cytoplasm. It catalyses the reaction phosphoenolpyruvate + UDP-N-acetyl-alpha-D-glucosamine = UDP-N-acetyl-3-O-(1-carboxyvinyl)-alpha-D-glucosamine + phosphate. The protein operates within cell wall biogenesis; peptidoglycan biosynthesis. Functionally, cell wall formation. Adds enolpyruvyl to UDP-N-acetylglucosamine. This is UDP-N-acetylglucosamine 1-carboxyvinyltransferase from Chlamydia pneumoniae (Chlamydophila pneumoniae).